A 302-amino-acid chain; its full sequence is MEEKQKIAEAESLKKLAFFGISVSTIATLTAIIAVPMLYNYMQHVQSSLQNEVEFCKHRTDGLWDEFHRFETVKGVDSRIKRDTRSRRGGYAEGGAAAGGGGGGGGSCCSCGIGAAGPAGAPGKDGAPGEDGKAGNPGTAGSDAEAAAAPTASDFCFDCPPGPAGPAGGPGPAGPPGPAGADGNTPSGGGEGPAGPPGPPGPAGNPGTDGAPGNPGAPGQVTETPGTPGPAGAAGPPGPPGPAGNPGSAGASEPGPAGPAGDAGPDGAPGNAGAPGAPGEAGAPGSGGGCDHCPPPRTAPGY.

2 disordered regions span residues 79–103 and 119–302; these read RIKRDTRSRRGGYAEGGAAAGGGGG and AGAP…APGY. Residues 91–103 show a composition bias toward gly residues; that stretch reads YAEGGAAAGGGGG. Triple-helical region stretches follow at residues 114-143, 162-185, 189-221, 226-252, and 255-290; these read GAAGPAGAPGKDGAPGEDGKAGNPGTAGSD, GPAGPAGGPGPAGPPGPAGADGNT, GGEGPAGPPGPPGPAGNPGTDGAPGNPGAPGQV, GTPGPAGAAGPPGPPGPAGNPGSAGAS, and GPAGPAGDAGPDGAPGNAGAPGAPGEAGAPGSGGGC. Over residues 137-154 the composition is skewed to low complexity; sequence PGTAGSDAEAAAAPTASD. Residues 194 to 203 show a composition bias toward pro residues; the sequence is AGPPGPPGPA. Composition is skewed to low complexity over residues 205–234 and 245–281; these read NPGTDGAPGNPGAPGQVTETPGTPGPAGAA and NPGSAGASEPGPAGPAGDAGPDGAPGNAGAPGAPGEA. A compositionally biased stretch (pro residues) spans 293 to 302; sequence CPPPRTAPGY.

This sequence belongs to the cuticular collagen family. In terms of assembly, collagen polypeptide chains are complexed within the cuticle by disulfide bonds and other types of covalent cross-links.

In terms of biological role, nematode cuticles are composed largely of collagen-like proteins. The cuticle functions both as an exoskeleton and as a barrier to protect the worm from its environment. The protein is Cuticle collagen 40 (col-40) of Caenorhabditis elegans.